The following is a 176-amino-acid chain: PRELI domain-containing protein 2 (176 aa).

Residues 1–175 enclose the PRELI/MSF1 domain; that stretch reads MGIAVEARKV…ILRERCGCPF (175 aa).

The chain is PRELI domain-containing protein 2 (prelid2) from Xenopus tropicalis (Western clawed frog).